We begin with the raw amino-acid sequence, 77 residues long: uncharacterized protein (77 aa).

4Fe-4S ferredoxin-type domains are found at residues 3-32 (VEII…WTKD) and 36-65 (KYYA…IKVV). Residues Cys12, Cys15, Cys18, Cys22, Cys45, Cys48, Cys51, and Cys55 each coordinate [4Fe-4S] cluster.

It depends on [4Fe-4S] cluster as a cofactor.

In terms of biological role, ferredoxins are iron-sulfur proteins that transfer electrons probably in the CO-dehydrogenase complex. This is an uncharacterized protein from Methanocaldococcus jannaschii (strain ATCC 43067 / DSM 2661 / JAL-1 / JCM 10045 / NBRC 100440) (Methanococcus jannaschii).